The primary structure comprises 86 residues: Small ribosomal subunit protein uS17 (86 aa).

The protein belongs to the universal ribosomal protein uS17 family. Part of the 30S ribosomal subunit.

Functionally, one of the primary rRNA binding proteins, it binds specifically to the 5'-end of 16S ribosomal RNA. The protein is Small ribosomal subunit protein uS17 of Caldicellulosiruptor saccharolyticus (strain ATCC 43494 / DSM 8903 / Tp8T 6331).